A 116-amino-acid polypeptide reads, in one-letter code: T-cell leukemia/lymphoma protein 1A (116 aa).

The protein belongs to the TCL1 family. As to quaternary structure, homodimer. Interacts with AKT1, AKT2 and AKT3 (via PH domain). Interacts with PNPT1; the interaction has no effect on PNPT1 exonuclease activity.

It is found in the cytoplasm. The protein localises to the nucleus. The protein resides in the microsome. Its subcellular location is the endoplasmic reticulum. Its function is as follows. Enhances the phosphorylation and activation of AKT1 and AKT2. Enhances cell proliferation, stabilizes mitochondrial membrane potential and promotes cell survival. The chain is T-cell leukemia/lymphoma protein 1A (Tcl1a) from Mus musculus (Mouse).